The sequence spans 137 residues: 15 kDa protein A (137 aa).

The signal sequence occupies residues 1 to 20 (MAGVWKVLVVLVGLAVVACA). 2 disulfides stabilise this stretch: cysteine 77/cysteine 88 and cysteine 99/cysteine 116.

Belongs to the cathelicidin family. Large granules of neutrophils.

The protein localises to the secreted. Its function is as follows. Binds to bacterial lipopolysaccharides (LPS), potentiates strongly the early antibacterial effects of BPI. Inhibits the late lethal action of BPI. In Oryctolagus cuniculus (Rabbit), this protein is 15 kDa protein A.